The following is a 303-amino-acid chain: Uracil phosphoribosyltransferase (303 aa).

The tract at residues 1-86 is unknown; the sequence is MHIIMKTILA…RYVSSTPTDS (86 aa). The interval 87-303 is UPRTase; that stretch reads LSSKPLAAVY…DRLCGTSNPS (217 aa). 5-phospho-alpha-D-ribose 1-diphosphate contacts are provided by residues Arg170, Arg195, and 222–230; that span reads DPMLATGGS. Residues Ile285 and 290–292 each bind uracil; that span reads GDA. Asp291 is a 5-phospho-alpha-D-ribose 1-diphosphate binding site.

Belongs to the UPRTase family. Mg(2+) serves as cofactor.

The enzyme catalyses UMP + diphosphate = 5-phospho-alpha-D-ribose 1-diphosphate + uracil. It participates in pyrimidine metabolism; UMP biosynthesis via salvage pathway; UMP from uracil: step 1/1. Allosterically activated by GTP. In terms of biological role, catalyzes the conversion of uracil and 5-phospho-alpha-D-ribose 1-diphosphate (PRPP) to UMP and diphosphate. This chain is Uracil phosphoribosyltransferase (upp), found in Chlamydia muridarum (strain MoPn / Nigg).